We begin with the raw amino-acid sequence, 93 residues long: Small ribosomal subunit protein bS20c (93 aa).

Belongs to the bacterial ribosomal protein bS20 family.

It localises to the plastid. Its subcellular location is the chloroplast. Functionally, binds directly to 16S ribosomal RNA. This is Small ribosomal subunit protein bS20c from Trieres chinensis (Marine centric diatom).